The primary structure comprises 1151 residues: ATP-dependent helicase/deoxyribonuclease subunit B (1151 aa).

The region spanning 1 to 273 (MALRLVLGRA…LALAAGVRVE (273 aa)) is the UvrD-like helicase ATP-binding domain. 8–15 (GRAGSGKT) provides a ligand contact to ATP. Residues 282–578 (PPRFREAPAL…KLRLIPPALD (297 aa)) form the UvrD-like helicase C-terminal domain. The [4Fe-4S] cluster site is built by C788, C1107, C1110, and C1116.

It belongs to the helicase family. AddB/RexB type 1 subfamily. In terms of assembly, heterodimer of AddA and AddB. Mg(2+) is required as a cofactor. Requires [4Fe-4S] cluster as cofactor.

The heterodimer acts as both an ATP-dependent DNA helicase and an ATP-dependent, dual-direction single-stranded exonuclease. Recognizes the chi site generating a DNA molecule suitable for the initiation of homologous recombination. The AddB subunit has 5' -&gt; 3' nuclease activity but not helicase activity. This Moorella thermoacetica (strain ATCC 39073 / JCM 9320) protein is ATP-dependent helicase/deoxyribonuclease subunit B.